A 510-amino-acid chain; its full sequence is NAD(P)H-quinone oxidoreductase subunit 2, chloroplastic (510 aa).

Transmembrane regions (helical) follow at residues 24–44 (LLLFHGSFIFPECILIFGLIL), 59–79 (WFYFISSTSLVMSITALLFRW), 99–119 (IFQFLILLCSTLCIPLSVEYI), 124–144 (MAITEFLLFVLTATLGGMFLC), 149–169 (XITIFVAPECFSLCSYLLSGY), 183–203 (YLLMGGASSSILVHGFSWLYG), 229–249 (ISIALISITVGIGFKLSPAPF), 295–315 (WHLLLEILAILSMILGNLIAI), 323–343 (MLAYSSIGQIGYVIIGIIVGD), 347–367 (GYASMITYMLFYISMNLGTFA), 395–415 (ALSSALCLLSLGGLPPLAGFF), 418–438 (LHLFWCGWQAGLYFLVSIGLL), and 484–504 (MTVCVIAXTIPGISMNPILAI).

It belongs to the complex I subunit 2 family. As to quaternary structure, NDH is composed of at least 16 different subunits, 5 of which are encoded in the nucleus.

Its subcellular location is the plastid. The protein localises to the chloroplast thylakoid membrane. The enzyme catalyses a plastoquinone + NADH + (n+1) H(+)(in) = a plastoquinol + NAD(+) + n H(+)(out). It catalyses the reaction a plastoquinone + NADPH + (n+1) H(+)(in) = a plastoquinol + NADP(+) + n H(+)(out). Its function is as follows. NDH shuttles electrons from NAD(P)H:plastoquinone, via FMN and iron-sulfur (Fe-S) centers, to quinones in the photosynthetic chain and possibly in a chloroplast respiratory chain. The immediate electron acceptor for the enzyme in this species is believed to be plastoquinone. Couples the redox reaction to proton translocation, and thus conserves the redox energy in a proton gradient. The protein is NAD(P)H-quinone oxidoreductase subunit 2, chloroplastic of Narcissus elegans (Daffodil).